Here is a 104-residue protein sequence, read N- to C-terminus: U20-lycotoxin-Ls1d (104 aa).

A signal peptide spans 1–30 (MFSTSDQVSKMNSRILSALLILGIATCVIA). The 46-residue stretch at 31 to 76 (GGFCPKSRHPQCNLSYKINDCCAQSDCRVGSVCCVEGCGNVCRAES) folds into the WAP domain. 5 disulfide bridges follow: Cys-34/Cys-64, Cys-42/Cys-68, Cys-51/Cys-63, Cys-52/Cys-90, and Cys-57/Cys-72.

It belongs to the venom protein 11 family. 02 (wap-2) subfamily. Contains 5 disulfide bonds. Expressed by the venom gland.

It localises to the secreted. In terms of biological role, has antibacterial activity. The protein is U20-lycotoxin-Ls1d of Lycosa singoriensis (Wolf spider).